The chain runs to 603 residues: MAANEDRDDAAAILNWEGTSEIKSANEYSRNLLFSVLDSLDGNKTIVWDRDRSVMHRVNLFAGASVLAAHGVVANHSIETKKSASTPHVVFFLAPTMVSLDLLCDYIDNVRNDSKILYQVFFIPEAWFVVRESLKTRAEGKYWERLESVKEIPLCWLPRDGECLSLSSPQIAARLLINGDWTHLHKCAVALNQLIDMCRGRSSSSNQRPMSIYAKGKWASDVAKMMGKIRNSAEADSMTKNLDPIEGLLKINRIVLIDRWMDPLTPMLSQLTFYGLLDEIYGIGMVNSVKVPEMEFKNEKDGDPFQEKEVYLIDEVYHRLKHSHINAVSIEASKVLAEIRDDEQFDRDKMSVAEYSVLVKKMPKIINRKKMIEVHMRLAEMIQSHVYCKQSDSIKLERDLLEYSDSDKAIPLIEDLIFDASPLNAVLRLISVHSLTCGGLKPSVLQHYRRIVNQSYGSSALNKVLKMQKMGLIREKGGGGKMQCEYAQMMFQQMKKNHDMLPEEFSEAKLDDMAYAYSGFSPLLCKMLEEGDRVKWVGWPKTVIGDKSDLIAERDGRGTCVFVIGGLTRSELAIIRENLPNVALITTSALITGDKLLNNITNI.

Belongs to the STXBP/unc-18/SEC1 family. As to quaternary structure, probable component of the homotypic fusion and vacuole protein sorting (HOPS) complex consisting of the core class C Vps proteins vps-11, vps-16, vps-18, and which further associates with vps-33.1, vps-39 and vps-41. Interacts with spe-39. Ubiquitously expressed at high levels in somatic tissues including the pharynx, muscles, hypodermis, neurons, coelomocytes and spermatheca. Expressed in the intestine.

It localises to the lysosome. Its subcellular location is the early endosome. The protein localises to the late endosome. It is found in the apical cell membrane. Its function is as follows. Plays a role in vesicle-mediated protein trafficking to lysosomal compartments including the endocytic membrane transport pathways. Believed to act as a component of the putative HOPS endosomal tethering complex which is proposed to be involved in the rab-5-to-rab-7 endosome conversion probably implicating sand-1, and via binding SNAREs and SNARE complexes to mediate tethering and docking events during SNARE-mediated membrane fusion. The HOPS complex is proposed to be recruited to rab-7 on the late endosomal membrane and to regulate late endocytic, phagocytic and autophagic traffic towards lysosomes. Within the HOPS complex, contributes to the normal development of gut granules in embryonic and adult intestinal cells. Required for endosome/lysosome fusion. Required for early embryonic development. This is Vacuolar protein sorting-associated protein 33A from Caenorhabditis elegans.